The primary structure comprises 343 residues: Probable dolichyl-diphosphooligosaccharide--protein glycosyltransferase subunit 3A (343 aa).

A signal peptide spans Met1 to Ala22. At Asn23–Leu185 the chain is on the lumenal side. Asn105, Asn108, and Asn146 each carry an N-linked (GlcNAc...) asparagine glycan. The chain crosses the membrane as a helical span at residues Ile186–Ile206. Residues Lys207–Arg220 are Cytoplasmic-facing. The chain crosses the membrane as a helical span at residues Ile221 to Ile241. The Lumenal portion of the chain corresponds to Ile242–Gly273. A helical transmembrane segment spans residues Phe274–Val294. The Cytoplasmic segment spans residues Val295–Arg304. Residues Met305 to Asp325 form a helical membrane-spanning segment. Topologically, residues Asn326–Gly343 are lumenal.

This sequence belongs to the OST3/OST6 family. Component of the oligosaccharyltransferase (OST) complex.

It localises to the endoplasmic reticulum membrane. In terms of biological role, subunit of the oligosaccharyl transferase (OST) complex that catalyzes the initial transfer of a defined glycan (Glc(3)Man(9)GlcNAc(2) in eukaryotes) from the lipid carrier dolichol-pyrophosphate to an asparagine residue within an Asn-X-Ser/Thr consensus motif in nascent polypeptide chains, the first step in protein N-glycosylation. N-glycosylation occurs cotranslationally and the complex associates with the Sec61 complex at the channel-forming translocon complex that mediates protein translocation across the endoplasmic reticulum (ER). All subunits are required for a maximal enzyme activity. This is Probable dolichyl-diphosphooligosaccharide--protein glycosyltransferase subunit 3A (OST3A) from Arabidopsis thaliana (Mouse-ear cress).